Reading from the N-terminus, the 99-residue chain is Aspartyl/glutamyl-tRNA(Asn/Gln) amidotransferase subunit C (99 aa).

The protein belongs to the GatC family. Heterotrimer of A, B and C subunits.

It carries out the reaction L-glutamyl-tRNA(Gln) + L-glutamine + ATP + H2O = L-glutaminyl-tRNA(Gln) + L-glutamate + ADP + phosphate + H(+). It catalyses the reaction L-aspartyl-tRNA(Asn) + L-glutamine + ATP + H2O = L-asparaginyl-tRNA(Asn) + L-glutamate + ADP + phosphate + 2 H(+). In terms of biological role, allows the formation of correctly charged Asn-tRNA(Asn) or Gln-tRNA(Gln) through the transamidation of misacylated Asp-tRNA(Asn) or Glu-tRNA(Gln) in organisms which lack either or both of asparaginyl-tRNA or glutaminyl-tRNA synthetases. The reaction takes place in the presence of glutamine and ATP through an activated phospho-Asp-tRNA(Asn) or phospho-Glu-tRNA(Gln). The sequence is that of Aspartyl/glutamyl-tRNA(Asn/Gln) amidotransferase subunit C from Cupriavidus taiwanensis (strain DSM 17343 / BCRC 17206 / CCUG 44338 / CIP 107171 / LMG 19424 / R1) (Ralstonia taiwanensis (strain LMG 19424)).